The following is a 438-amino-acid chain: MGNKPTIAISHLGCEKNRIDSEHMLGLLAQAGYPVDANEELADYVIVNTCSFIQSAREESVRTLVELAEANKKVIISGCMAQHFQDELLSELPEAVAIVGTGDYQKIVQVIQRVENGQRVKEISSEPTYIADETVPRYRTTSEGVAYLRVAEGCDYRCSFCIIPHLRGNQRSRTIESIVREAQQLADQGVQELILISQITTNYGLDLYGEPKLAQLLQALGEVDIPWIRIHYAYPTGLTPKVIEAIRETPNVLPYLDLPLQHSHPDILKRMNRPWQGRVNDSIIERIKDAIPKAVLRTTFIVGFPGETEEHYAHLVEFVKRHEFDHVGVFTFSPEEETPAYHMANQIPQEIMEQRRDTIMQIQQPISLQKNCACIGDIVDVLIEQENPDTGQFIGRSARFAPEVDGLVYVEGEASLGTIIPVKIKDADIYDLYGEVIN.

The 112-residue stretch at 5-116 folds into the MTTase N-terminal domain; it reads PTIAISHLGC…IVQVIQRVEN (112 aa). C14, C50, C79, C154, C158, and C161 together coordinate [4Fe-4S] cluster. One can recognise a Radical SAM core domain in the interval 140–369; sequence TTSEGVAYLR…MQIQQPISLQ (230 aa). A TRAM domain is found at 372 to 438; that stretch reads CACIGDIVDV…IYDLYGEVIN (67 aa).

The protein belongs to the methylthiotransferase family. RimO subfamily. It depends on [4Fe-4S] cluster as a cofactor.

The protein resides in the cytoplasm. The enzyme catalyses L-aspartate(89)-[ribosomal protein uS12]-hydrogen + (sulfur carrier)-SH + AH2 + 2 S-adenosyl-L-methionine = 3-methylsulfanyl-L-aspartate(89)-[ribosomal protein uS12]-hydrogen + (sulfur carrier)-H + 5'-deoxyadenosine + L-methionine + A + S-adenosyl-L-homocysteine + 2 H(+). Catalyzes the methylthiolation of an aspartic acid residue of ribosomal protein uS12. In Gloeothece citriformis (strain PCC 7424) (Cyanothece sp. (strain PCC 7424)), this protein is Ribosomal protein uS12 methylthiotransferase RimO.